Here is a 405-residue protein sequence, read N- to C-terminus: MSERIVISPTSRQEGHAELVMEVDDEGIVTKGRYFSITPVRGLEKIVTGKAPETAPVIVQRICGVCPIPHTLASVEAIDDSLDIEVPKAGRLLRELTLAAHHVNSHAIHHFLIAPDFVPENLMADAINSVSEIRKNAQYVVDMVAGEGIHPSDVRIGGMADNITELARKRLYARLKQLKPKVDEHVELMIGLIEDKGLPKGLGVHNQPTLASHQIYGDRTKFDLDRFTEVMPESWYDDPEIAKRACSTIPLYDGRNVEVGPRARMVEFQGFKERGVVAQHVARALEMKTALARAIEILDELDTSAPVRADFDERGTGKLGVGAIEGPRGLDVHMAQVENGKIQFYSALVPTTWNIPTMGPATEGFHHEYGPHVIRAYDPCLSCATHVMVVDDEDRSVIRDEMVRL.

Positions 63, 66, 380, and 383 each coordinate Ni(2+).

Belongs to the [NiFe]/[NiFeSe] hydrogenase large subunit family. As to quaternary structure, heterocomplex of the form (alpha(1)beta(1)gamma(1))(8). The cofactor is Ni(2+). It depends on iron-sulfur cluster as a cofactor. FAD is required as a cofactor.

The catalysed reaction is oxidized coenzyme F420-(gamma-L-Glu)(n) + H2 + H(+) = reduced coenzyme F420-(gamma-L-Glu)(n). In terms of biological role, reduces the physiological low-potential two-electron acceptor coenzyme F420, and the artificial one-electron acceptor methylviologen. The sequence is that of Coenzyme F420 hydrogenase subunit alpha (frhA) from Methanothermobacter thermautotrophicus (strain ATCC 29096 / DSM 1053 / JCM 10044 / NBRC 100330 / Delta H) (Methanobacterium thermoautotrophicum).